Here is a 679-residue protein sequence, read N- to C-terminus: HEAT repeat-containing protein 3 (679 aa).

Residues Met-1–Arg-11 show a composition bias toward basic residues. Residues Met-1–Ala-40 are disordered. At Ser-15 the chain carries Phosphoserine. HEAT repeat units follow at residues Gly-38 to Arg-69 and Asp-74 to Gly-110. Phosphoserine is present on Ser-144. Thr-339 carries the post-translational modification Phosphothreonine.

The protein belongs to the nuclear import and ribosome assembly adapter family. Component of a hexameric 5S RNP precursor complex, composed of 5S RNA, RRS1, RPF2/BXDC1, RPL5, RPL11 and HEATR3; this complex acts as a precursor for ribosome assembly.

In terms of biological role, plays a role in ribosome biogenesis and in nuclear import of the 60S ribosomal protein L5/large ribosomal subunit protein uL18 (RPL5). Required for proper erythrocyte maturation. This Mus musculus (Mouse) protein is HEAT repeat-containing protein 3 (Heatr3).